Here is a 46-residue protein sequence, read N- to C-terminus: Bottromycin D (46 aa).

Residues 10-46 (MTADFLNDDPNNAELSSLEMEELESWGAWSDDTDQSV) constitute a propeptide that is removed on maturation.

The precursor peptide is first ribosomally synthesized and then highly tailored by specific enzymes to yield the final natural product. These modifications include several methylations, cyclization and the formation of t-Leu and Thia-beta-Ala residues.

The protein localises to the secreted. Bottromycin D is a ribosomally synthesized and post-translationally modified peptide (RiPP) that displays antibiotic activity against methicillin-resistant S.aureus (MRSA). In Streptomyces sp, this protein is Bottromycin D.